The sequence spans 660 residues: uncharacterized protein (660 aa).

The tract at residues Met-1 to Arg-660 is disordered. Gly residues predominate over residues Arg-67 to Arg-80. Residues Ser-104 to Ser-116 are compositionally biased toward polar residues. 4 repeat units span residues Ser-149–Arg-273, Ser-274–Arg-398, Ser-399–Arg-523, and Ser-524–Arg-648. The interval Ser-149–Arg-648 is 4 X 125 AA tandem repeats. Low complexity-rich tracts occupy residues Arg-177–Ala-196, Arg-302–Ala-321, Arg-427–Ala-446, and Arg-552–Ala-571.

This is an uncharacterized protein from Homo sapiens (Human).